The sequence spans 417 residues: Prostaglandin E2 receptor EP3 subtype (417 aa).

Over 1–52 (MKATRDHASAPFCTRFNHSDPGIWAAERAVEAPNNLTLPPEPSEDCGSVSVA) the chain is Extracellular. 2 N-linked (GlcNAc...) asparagine glycosylation sites follow: Asn-17 and Asn-35. The helical transmembrane segment at 53-77 (FSMTMMITGFVGNALAITLVSKSYR) threads the bilayer. Over 78–90 (RREGKRKKSFLLC) the chain is Cytoplasmic. The chain crosses the membrane as a helical span at residues 91-111 (IGWLALTDMVGQLLTSPVVIV). Topologically, residues 112 to 130 (LYLSHQRWEQLDPSGRLCT) are extracellular. Residues 131–152 (FFGLTMTVFGLSSLFIASAMAV) form a helical membrane-spanning segment. Residues 153-174 (ERALATRAPHWYSSHMKTSVTR) are Cytoplasmic-facing. Residues 175–196 (AVLLGVWLAVLAFALLPVLGVG) form a helical membrane-spanning segment. Topologically, residues 197–226 (QYTIQWPGTWCFISTGPGGNGTNSRQNWGN) are extracellular. Asn-216 carries N-linked (GlcNAc...) asparagine glycosylation. The chain crosses the membrane as a helical span at residues 227–252 (VFFASAFAILGLSALVVTFACNLATI). Residues 253–282 (KALVSRCRAKATASQSSAQWGRITTETAIQ) lie on the Cytoplasmic side of the membrane. A helical membrane pass occupies residues 283-306 (LMGIMCVLSVCWSPLLIMMLKMIF). Asn-307 is a glycosylation site (N-linked (GlcNAc...) asparagine). At 307–326 (NHTSVEHCKTYTENQDECNF) the chain is on the extracellular side. Residues 327 to 348 (FLIAVRLASLNQILDPWVYLLL) form a helical membrane-spanning segment. At 349–417 (RKILLQKFCQ…HIYLHTLEHQ (69 aa)) the chain is on the cytoplasmic side.

Belongs to the G-protein coupled receptor 1 family. Interacts (via C-terminus) with MKLN1.

The protein resides in the cell membrane. Functionally, receptor for prostaglandin E2 (PGE2). The various isoforms have identical ligand binding properties but interact with different second messenger systems: isoform EP3A couples to G(i)/G(o) proteins; isoform EP3B and isoform EP3C couple to G(s), and isoform EP3D couples to G(i), G(s) and G(p). Required for normal development of fever in response to pyrinogens, including IL1B, prostaglandin E2 and bacterial lipopolysaccharide (LPS). Required for normal potentiation of platelet aggregation by prostaglandin E2, and thus plays a role in the regulation of blood coagulation. Required for increased HCO3(-) secretion in the duodenum in response to mucosal acidification, and thereby contributes to the protection of the mucosa against acid-induced ulceration. Not required for normal kidney function, normal urine volume and osmolality. The polypeptide is Prostaglandin E2 receptor EP3 subtype (PTGER3) (Bos taurus (Bovine)).